Reading from the N-terminus, the 96-residue chain is Co-chaperonin GroES (96 aa).

This sequence belongs to the GroES chaperonin family. In terms of assembly, heptamer of 7 subunits arranged in a ring. Interacts with the chaperonin GroEL.

The protein resides in the cytoplasm. Functionally, together with the chaperonin GroEL, plays an essential role in assisting protein folding. The GroEL-GroES system forms a nano-cage that allows encapsulation of the non-native substrate proteins and provides a physical environment optimized to promote and accelerate protein folding. GroES binds to the apical surface of the GroEL ring, thereby capping the opening of the GroEL channel. The protein is Co-chaperonin GroES of Shewanella loihica (strain ATCC BAA-1088 / PV-4).